The following is a 702-amino-acid chain: Arginine decarboxylase 1, chloroplastic (702 aa).

A chloroplast-targeting transit peptide spans Met1 to Tyr52. Lys136 carries the N6-(pyridoxal phosphate)lysine modification. Residues Ser288, Gly325, and Glu374 to Arg377 each bind pyridoxal 5'-phosphate. Ile320 to Tyr330 is a binding site for substrate. Tyr436–Val437 is a binding site for substrate. The Proton donor; shared with dimeric partner role is filled by Cys524. Asp525 contacts substrate. Tyr565 provides a ligand contact to pyridoxal 5'-phosphate.

It belongs to the Orn/Lys/Arg decarboxylase class-II family. SpeA subfamily. Homodimer. Only the dimer is catalytically active, as the active sites are constructed of residues from both monomers. May form a head-to-tail homodimer. Homodimer and heterodimer with ADC2. Requires pyridoxal 5'-phosphate as cofactor. Mg(2+) serves as cofactor.

The protein resides in the plastid. The protein localises to the chloroplast. It localises to the cytoplasm. It is found in the cytosol. It catalyses the reaction L-arginine + H(+) = agmatine + CO2. The protein operates within amine and polyamine biosynthesis; agmatine biosynthesis; agmatine from L-arginine: step 1/1. Functionally, required for the biosynthesis of putrescine. Catalyzes the first step of polyamine (PA) biosynthesis to produce putrescine from arginine. Is a minor contributor to basal arginine decarboxylase (ADC) activity and putrescine biosynthesis. Accumulation of putrescine plays a positive role in freezing tolerance. Production of polyamines is essential for normal seed development. Controls PA homeostasis which is crucial for normal plant growth and development. The chain is Arginine decarboxylase 1, chloroplastic from Arabidopsis thaliana (Mouse-ear cress).